Consider the following 98-residue polypeptide: Nucleoid-associated protein pc0477 (98 aa).

It belongs to the YbaB/EbfC family. In terms of assembly, homodimer.

It is found in the cytoplasm. The protein localises to the nucleoid. Functionally, binds to DNA and alters its conformation. May be involved in regulation of gene expression, nucleoid organization and DNA protection. The chain is Nucleoid-associated protein pc0477 from Protochlamydia amoebophila (strain UWE25).